The sequence spans 491 residues: Delayed-rectifier potassium channel regulatory subunit KCNS3 (491 aa).

At 1–182 the chain is on the cytoplasmic side; it reads MVFGEFFHRP…IRMENPAYCL (182 aa). The helical transmembrane segment at 183–204 threads the bilayer; sequence SAKLIAISSLSVVLASIVAMCV. At 205–220 the chain is on the extracellular side; the sequence is HSMSEFQNEDGEVDDP. Residues 221–243 form a helical membrane-spanning segment; sequence VLEGVEIACIAWFTGELAVRLVA. The Cytoplasmic segment spans residues 244–254; sequence APCQKKFWKNP. Residues 255–275 form a helical membrane-spanning segment; the sequence is LNIIDFVSIIPFYATLAVDTK. Residues 276–285 lie on the Extracellular side of the membrane; the sequence is EEESEDIENM. The helical; Voltage-sensor transmembrane segment at 286–306 threads the bilayer; sequence GKVVQILRLMRIFRILKLARH. Residues 307-321 are Cytoplasmic-facing; sequence SVGLRSLGATLRHSY. A helical membrane pass occupies residues 322–343; sequence HEVGLLLLFLSVGISIFSVLIY. Over 344-357 the chain is Extracellular; that stretch reads SVEKDDHTSSLTSI. The helical intramembrane region spans 358–369; it reads PICWWWATISMT. The Selectivity filter signature appears at 370–375; sequence TVGYGD. Residues 370–377 lie within the membrane without spanning it; that stretch reads TVGYGDTH. Residues 378-384 lie on the Extracellular side of the membrane; the sequence is PVTLAGK. The helical transmembrane segment at 385-413 threads the bilayer; it reads LIASTCIICGILVVALPITIIFNKFSKYY. Over 414 to 491 the chain is Cytoplasmic; the sequence is QKQKDIDVDQ…TASLENCTAK (78 aa).

The protein belongs to the potassium channel family. S (TC 1.A.1.2) subfamily. Kv9.3/KCNS3 sub-subfamily. As to quaternary structure, heterotetramer with KCNB1. Does not form homomultimers.

The protein localises to the cell membrane. Potassium channel regulatory subunit that modulates the delayed rectifier potassium channel activity of KCNB1 by namely slowing down the deactivation and inactivation time constants. While it does not form functional channel on its own, it can form functional heterotetrameric channels with KCNB1. The chain is Delayed-rectifier potassium channel regulatory subunit KCNS3 from Oryctolagus cuniculus (Rabbit).